The primary structure comprises 208 residues: Large ribosomal subunit protein uL4 (208 aa).

The disordered stretch occupies residues 45–89; the sequence is RQGTHAHKNRSAVSGGGKKPWRQKGTGRARQGSTRSPQWRGGGTV.

The protein belongs to the universal ribosomal protein uL4 family. In terms of assembly, part of the 50S ribosomal subunit.

One of the primary rRNA binding proteins, this protein initially binds near the 5'-end of the 23S rRNA. It is important during the early stages of 50S assembly. It makes multiple contacts with different domains of the 23S rRNA in the assembled 50S subunit and ribosome. In terms of biological role, forms part of the polypeptide exit tunnel. The polypeptide is Large ribosomal subunit protein uL4 (Lactococcus lactis subsp. cremoris (strain MG1363)).